A 38-amino-acid polypeptide reads, in one-letter code: Toxin Bcg III 31.16 (38 aa).

3 cysteine pairs are disulfide-bonded: C4/C37, C6/C30, and C20/C38.

This sequence belongs to the sea anemone type 3 (BDS) potassium channel toxin family.

It localises to the secreted. The protein resides in the nematocyst. Possible modulator of crustacean voltage-gated sodium channels (Nav). The polypeptide is Toxin Bcg III 31.16 (Bunodosoma cangicum (Sea anemone)).